The sequence spans 373 residues: Glutamine synthetase (373 aa).

Position 2 is an N-acetylthreonine (Thr-2). Residues 2-25 form a required for glutamine-induced ubiquitination by CRL4(CRBN) and proteasomal degradation region; the sequence is TTSASSHLNKGIKQVYMSLPQGEK. N6-acetyllysine; by EP300 is present on residues Lys-11 and Lys-14. Residues 24–106 form the GS beta-grasp domain; that stretch reads EKVQAMYIWI…VLCEVFKYNR (83 aa). Tyr-104 carries the post-translational modification Phosphotyrosine. The 261-residue stretch at 113-373 folds into the GS catalytic domain; it reads LRHTCKRIMD…TGDEPFQYKN (261 aa). Glu-134 lines the ATP pocket. Mn(2+) contacts are provided by Glu-134, Glu-136, Glu-196, and Glu-203. An ATP-binding site is contributed by 203–208; it reads EFQIGP. 246–247 is an L-glutamate binding site; that stretch reads NW. His-253 is a Mn(2+) binding site. Residues 255–257, Arg-319, and Arg-324 contribute to the ATP site; that span reads NFS. Arg-319 contacts L-glutamate. 336–338 is an ADP binding site; it reads YFE. Residue Glu-338 participates in Mn(2+) binding. Arg-340 provides a ligand contact to L-glutamate. A Phosphoserine modification is found at Ser-343.

This sequence belongs to the glutamine synthetase family. In terms of assembly, decamer; composed of two pentamers. Interacts with PALMD. Interacts with RHOJ. Interacts with BEST2; this interaction tethers a fraction of GLUL to the membrane, causing a decrease of cytosolic glutamine synthase (GS) activity and inhibits the chloride channel activity of BEST2 by affecting the gating at the aperture in the absence of intracellular glutamate. Mg(2+) is required as a cofactor. It depends on Mn(2+) as a cofactor. Acetylated by EP300/p300; acetylation is stimulated by increased glutamine levels and promotes ubiquitin-mediated proteasomal degradation. In terms of processing, palmitoylated; undergoes autopalmitoylation. Post-translationally, ubiquitinated by ZNRF1. Ubiquitinated by the DCX (DDB1-CUL4-X-box) E3 ubiquitin-protein ligase complex called CRL4(CRBN), leading to proteasomal degradation. In terms of tissue distribution, expressed in endothelial cells.

The protein resides in the cytoplasm. The protein localises to the cytosol. It is found in the microsome. It localises to the mitochondrion. Its subcellular location is the cell membrane. The enzyme catalyses L-glutamate + NH4(+) + ATP = L-glutamine + ADP + phosphate + H(+). It carries out the reaction L-cysteinyl-[protein] + hexadecanoyl-CoA = S-hexadecanoyl-L-cysteinyl-[protein] + CoA. Its activity is regulated as follows. Glutamine synthetase activity is inhibited by methionine sulfoximine (MSO). Its function is as follows. Glutamine synthetase that catalyzes the ATP-dependent conversion of glutamate and ammonia to glutamine. Its role depends on tissue localization: in the brain, it regulates the levels of toxic ammonia and converts neurotoxic glutamate to harmless glutamine, whereas in the liver, it is one of the enzymes responsible for the removal of ammonia. Plays a key role in ammonium detoxification during erythropoiesis: the glutamine synthetase activity is required to remove ammonium generated by porphobilinogen deaminase (HMBS) during heme biosynthesis to prevent ammonium accumulation and oxidative stress. Essential for proliferation of fetal skin fibroblasts. Independently of its glutamine synthetase activity, required for endothelial cell migration during vascular development: acts by regulating membrane localization and activation of the GTPase RHOJ, possibly by promoting RHOJ palmitoylation. May act as a palmitoyltransferase for RHOJ: able to autopalmitoylate and then transfer the palmitoyl group to RHOJ. Plays a role in ribosomal 40S subunit biogenesis. Through the interaction with BEST2, inhibits BEST2 channel activity by affecting the gating at the aperture in the absence of intracellular L-glutamate, but sensitizes BEST2 to intracellular L-glutamate, which promotes the opening of BEST2 and thus relieves its inhibitory effect on BEST2. The protein is Glutamine synthetase of Homo sapiens (Human).